Consider the following 192-residue polypeptide: Probable GTP-binding protein EngB (192 aa).

In terms of domain architecture, EngB-type G spans glutamine 22–glycine 192. Residues glycine 30–serine 37, glycine 57–leucine 61, aspartate 75–glycine 78, threonine 142–aspartate 145, and tyrosine 172–alanine 174 each bind GTP. Mg(2+)-binding residues include serine 37 and threonine 59.

The protein belongs to the TRAFAC class TrmE-Era-EngA-EngB-Septin-like GTPase superfamily. EngB GTPase family. The cofactor is Mg(2+).

In terms of biological role, necessary for normal cell division and for the maintenance of normal septation. The chain is Probable GTP-binding protein EngB from Chlorobium phaeobacteroides (strain BS1).